Consider the following 600-residue polypeptide: Elongation factor 4 (600 aa).

Positions 5-187 constitute a tr-type G domain; it reads KYIRNFSIIA…AIVNKLPPPK (183 aa). Residues 17-22 and 134-137 contribute to the GTP site; these read DHGKST and NKID.

This sequence belongs to the TRAFAC class translation factor GTPase superfamily. Classic translation factor GTPase family. LepA subfamily.

The protein localises to the cell inner membrane. It catalyses the reaction GTP + H2O = GDP + phosphate + H(+). In terms of biological role, required for accurate and efficient protein synthesis under certain stress conditions. May act as a fidelity factor of the translation reaction, by catalyzing a one-codon backward translocation of tRNAs on improperly translocated ribosomes. Back-translocation proceeds from a post-translocation (POST) complex to a pre-translocation (PRE) complex, thus giving elongation factor G a second chance to translocate the tRNAs correctly. Binds to ribosomes in a GTP-dependent manner. In Rickettsia canadensis (strain McKiel), this protein is Elongation factor 4.